The primary structure comprises 107 residues: Urease subunit beta (107 aa).

Belongs to the urease beta subunit family. As to quaternary structure, heterotrimer of UreA (gamma), UreB (beta) and UreC (alpha) subunits. Three heterotrimers associate to form the active enzyme.

It is found in the cytoplasm. The enzyme catalyses urea + 2 H2O + H(+) = hydrogencarbonate + 2 NH4(+). It participates in nitrogen metabolism; urea degradation; CO(2) and NH(3) from urea (urease route): step 1/1. The sequence is that of Urease subunit beta from Bacillus sp. (strain TB-90).